A 71-amino-acid polypeptide reads, in one-letter code: Omega-conotoxin-like Ac6.4 (71 aa).

The first 22 residues, 1-22, serve as a signal peptide directing secretion; sequence MKLTCVVIVAVLLLTACQLLTA. Positions 23-45 are excised as a propeptide; it reads DDSRGTQKHRALRSDTKLSMSTR. 3 cysteine pairs are disulfide-bonded: cysteine 46–cysteine 61, cysteine 53–cysteine 65, and cysteine 60–cysteine 70. Cysteine amide is present on cysteine 70.

It belongs to the conotoxin O1 superfamily. Expressed by the venom duct.

The protein localises to the secreted. Functionally, omega-conotoxins act at presynaptic membranes, they bind and block voltage-gated calcium channels (Cav). The chain is Omega-conotoxin-like Ac6.4 from Conus achatinus (Little frog cone).